Consider the following 602-residue polypeptide: uncharacterized protein (602 aa).

The region spanning 51-210 (QYLGTQPRDF…PFVSYQPDAD (160 aa)) is the Helicase ATP-binding domain. The span at 430–439 (PHRESAHDPL) shows a compositional bias: basic and acidic residues. 2 disordered regions span residues 430-452 (PHRESAHDPLDGDPATRTQTERG) and 518-538 (RAQLQKGATQPATSGASASVH). The segment covering 523–534 (KGATQPATSGAS) has biased composition (polar residues).

To M.leprae ML1624.

This is an uncharacterized protein from Mycobacterium tuberculosis (strain ATCC 25618 / H37Rv).